We begin with the raw amino-acid sequence, 266 residues long: uncharacterized protein (266 aa).

The next 8 membrane-spanning stretches (helical) occupy residues 9-29, 37-57, 69-89, 123-143, 153-173, 184-204, 216-236, and 246-266; these read IAALLAVLSISMVLGIDLFIF, TMPHLGVGVLVAQLISLLVFY, LIKVNMTFAIYWAVWLLISLL, FLLMAALIAGLGCLSYLMIFT, YNPFAPILSGVILANLVLVIA, LPLAMIILLALNALAMFLFLL, SVFAYIIYFVCHFVIAAILIL, and TNSLFILLFIAVCLPLWMVFV.

The protein localises to the cell membrane. This is an uncharacterized protein from Haemophilus influenzae (strain ATCC 51907 / DSM 11121 / KW20 / Rd).